Consider the following 343-residue polypeptide: S-adenosylmethionine:tRNA ribosyltransferase-isomerase (343 aa).

This sequence belongs to the QueA family. Monomer.

The protein resides in the cytoplasm. The enzyme catalyses 7-aminomethyl-7-carbaguanosine(34) in tRNA + S-adenosyl-L-methionine = epoxyqueuosine(34) in tRNA + adenine + L-methionine + 2 H(+). It functions in the pathway tRNA modification; tRNA-queuosine biosynthesis. Its function is as follows. Transfers and isomerizes the ribose moiety from AdoMet to the 7-aminomethyl group of 7-deazaguanine (preQ1-tRNA) to give epoxyqueuosine (oQ-tRNA). In Geobacter metallireducens (strain ATCC 53774 / DSM 7210 / GS-15), this protein is S-adenosylmethionine:tRNA ribosyltransferase-isomerase.